A 123-amino-acid chain; its full sequence is WAP four-disulfide core domain protein 5 (123 aa).

The first 24 residues, 1–24 (MRTQSLLLLGALLAVGSQLPAVFG), serve as a signal peptide directing secretion. WAP domains follow at residues 27–73 (KGEK…CVPR) and 74–121 (VSVK…RDPA). Intrachain disulfides connect cysteine 34–cysteine 62, cysteine 41–cysteine 66, cysteine 49–cysteine 61, cysteine 55–cysteine 70, cysteine 81–cysteine 109, cysteine 88–cysteine 113, cysteine 96–cysteine 108, and cysteine 102–cysteine 117.

The protein resides in the secreted. Functionally, putative acid-stable proteinase inhibitor. This chain is WAP four-disulfide core domain protein 5 (WFDC5), found in Pan troglodytes (Chimpanzee).